We begin with the raw amino-acid sequence, 263 residues long: Phosphoribosylaminoimidazole-succinocarboxamide synthase (263 aa).

The interval 239–263 (MNENEPPKPAGPVLVSSKPDGETRH) is disordered.

It belongs to the SAICAR synthetase family.

It carries out the reaction 5-amino-1-(5-phospho-D-ribosyl)imidazole-4-carboxylate + L-aspartate + ATP = (2S)-2-[5-amino-1-(5-phospho-beta-D-ribosyl)imidazole-4-carboxamido]succinate + ADP + phosphate + 2 H(+). Its pathway is purine metabolism; IMP biosynthesis via de novo pathway; 5-amino-1-(5-phospho-D-ribosyl)imidazole-4-carboxamide from 5-amino-1-(5-phospho-D-ribosyl)imidazole-4-carboxylate: step 1/2. The chain is Phosphoribosylaminoimidazole-succinocarboxamide synthase from Chelativorans sp. (strain BNC1).